The chain runs to 209 residues: Ancillary SecYEG translocon subunit (209 aa).

Over 1-23 (MAAHLEEQQELDNFKYFWKTTGK) the chain is Cytoplasmic. Residues 24-42 (WLFALLILAALGYLGYTVY) form a helical membrane-spanning segment. The Periplasmic portion of the chain corresponds to 43–209 (QNRAASQNQE…LLQMKLDSLK (167 aa)). A TPR repeat occupies 161–194 (PLLMETKGDVYAAQEKSQEALKNYGQALEKMPQD).

The protein belongs to the YfgM family. As to quaternary structure, interacts with the SecYEG translocon. Forms a complex with PpiD.

The protein localises to the cell inner membrane. Its function is as follows. May mediate protein transfer from the SecYEG translocon to the periplasmic chaperone network via its periplasmic C-terminal region. This is Ancillary SecYEG translocon subunit from Neisseria gonorrhoeae (strain ATCC 700825 / FA 1090).